We begin with the raw amino-acid sequence, 459 residues long: Ribulose bisphosphate carboxylase (459 aa).

Asn111 is a substrate binding site. The Proton acceptor role is filled by Lys166. Lys168 provides a ligand contact to substrate. The Mg(2+) site is built by Lys191, Asp193, and Glu194. Lys191 is modified (N6-carboxylysine). His287 (proton acceptor) is an active-site residue. Residues Arg288, His321, and Ser368 each coordinate substrate.

It belongs to the RuBisCO large chain family. Type II subfamily. In terms of assembly, homodimer. The cofactor is Mg(2+).

The protein localises to the cytoplasm. It catalyses the reaction 2 (2R)-3-phosphoglycerate + 2 H(+) = D-ribulose 1,5-bisphosphate + CO2 + H2O. The catalysed reaction is D-ribulose 1,5-bisphosphate + O2 = 2-phosphoglycolate + (2R)-3-phosphoglycerate + 2 H(+). In terms of biological role, ruBisCO catalyzes two reactions: the carboxylation of D-ribulose 1,5-bisphosphate, the primary event in carbon dioxide fixation, as well as the oxidative fragmentation of the pentose substrate. Both reactions occur simultaneously and in competition at the same active site. In Halothiobacillus neapolitanus (strain ATCC 23641 / c2) (Thiobacillus neapolitanus), this protein is Ribulose bisphosphate carboxylase.